Consider the following 286-residue polypeptide: MNVRRAKTAGFCMGVSLALQKLNTALERRAGQSAGAGRICTLGPIIHNPQVLAEYETRGVVCVNDPAQLRQDDVAVIRAHGITRQVEQAVCASGATVVDATCPKVKKAQLSIARATSQGATLLLFGEEDHPEVRGLISYACGPAHVFGNAVELAALPLDPAQPYVLASQTTQDREIFTSIQESLSRALDDLTILSTICDATRERQEEARNIASSVDVMVVVGGRQSGNTRRLADVAALNGIATYHVESAEELEPKNFANKPRVGLTAGASTPKSLIDAAEKWLSSL.

Residue cysteine 12 coordinates [4Fe-4S] cluster. (2E)-4-hydroxy-3-methylbut-2-enyl diphosphate-binding residues include histidine 47 and histidine 80. Positions 47 and 80 each coordinate dimethylallyl diphosphate. Isopentenyl diphosphate contacts are provided by histidine 47 and histidine 80. Position 102 (cysteine 102) interacts with [4Fe-4S] cluster. Residue histidine 130 coordinates (2E)-4-hydroxy-3-methylbut-2-enyl diphosphate. Histidine 130 serves as a coordination point for dimethylallyl diphosphate. Histidine 130 is an isopentenyl diphosphate binding site. Residue glutamate 132 is the Proton donor of the active site. Threonine 170 is a binding site for (2E)-4-hydroxy-3-methylbut-2-enyl diphosphate. Residue cysteine 198 coordinates [4Fe-4S] cluster. (2E)-4-hydroxy-3-methylbut-2-enyl diphosphate contacts are provided by serine 226, asparagine 228, and serine 270. Residues serine 226, asparagine 228, and serine 270 each contribute to the dimethylallyl diphosphate site. Isopentenyl diphosphate contacts are provided by serine 226, asparagine 228, and serine 270.

This sequence belongs to the IspH family. [4Fe-4S] cluster serves as cofactor.

It catalyses the reaction isopentenyl diphosphate + 2 oxidized [2Fe-2S]-[ferredoxin] + H2O = (2E)-4-hydroxy-3-methylbut-2-enyl diphosphate + 2 reduced [2Fe-2S]-[ferredoxin] + 2 H(+). It carries out the reaction dimethylallyl diphosphate + 2 oxidized [2Fe-2S]-[ferredoxin] + H2O = (2E)-4-hydroxy-3-methylbut-2-enyl diphosphate + 2 reduced [2Fe-2S]-[ferredoxin] + 2 H(+). It participates in isoprenoid biosynthesis; dimethylallyl diphosphate biosynthesis; dimethylallyl diphosphate from (2E)-4-hydroxy-3-methylbutenyl diphosphate: step 1/1. Its pathway is isoprenoid biosynthesis; isopentenyl diphosphate biosynthesis via DXP pathway; isopentenyl diphosphate from 1-deoxy-D-xylulose 5-phosphate: step 6/6. Functionally, catalyzes the conversion of 1-hydroxy-2-methyl-2-(E)-butenyl 4-diphosphate (HMBPP) into a mixture of isopentenyl diphosphate (IPP) and dimethylallyl diphosphate (DMAPP). Acts in the terminal step of the DOXP/MEP pathway for isoprenoid precursor biosynthesis. The chain is 4-hydroxy-3-methylbut-2-enyl diphosphate reductase from Desulfovibrio desulfuricans (strain ATCC 27774 / DSM 6949 / MB).